We begin with the raw amino-acid sequence, 154 residues long: Protein-export protein SecB (154 aa).

It belongs to the SecB family. In terms of assembly, homotetramer, a dimer of dimers. One homotetramer interacts with 1 SecA dimer.

Its subcellular location is the cytoplasm. Functionally, one of the proteins required for the normal export of preproteins out of the cell cytoplasm. It is a molecular chaperone that binds to a subset of precursor proteins, maintaining them in a translocation-competent state. It also specifically binds to its receptor SecA. This Buchnera aphidicola subsp. Schizaphis graminum (strain Sg) protein is Protein-export protein SecB.